A 705-amino-acid polypeptide reads, in one-letter code: MSGSIDVITHFGPDADKPEIITALENLTKLHALSVEDLYIKWEQFSNQRRQTHTDLTSKNIDEFKQFLQLQMEKRANQISSSSKVNTSTKKPVIKKSLNSSPLFGLSIPKTPTLKKRKLHGPFSLSDSKQTYNVGSEAETNEKGNSSLKLEFTPGMAEDAVGDSAPLSHAKSSDAKTPGSSTFQTPTTNTPTTSRQNVPAGEILDSLNPENIEISSGNPNVGLLSTEEPSYNQVKVEPFYDAKKYKFRTMRQNLQEASDVLDDQIESFTKIIQNHYKLSPNDFADPTIQSQSEIYAVGRIVPDSPTYDKFLNPESLSLETSRMGGVGRRVRLDLSQVNELSFFLGQIVAFKGKNANGDYFTVNSILPLPYPNSPVSTSQELQEFQANLEGSSLKVIVTCGPYFANDNFSLELLQEFIDSINNEVKPHVLIMFGPFIDITHPLIASGKLPNFPQFKTQPKTLDELFLKLFTPILKTISPHIQTVLIPSTKDAISNHAAYPQASLIRKALQLPKRNFKCMANPSSFQINEIYFGCSNVDTFKDLKEVIKGGTTSSRYRLDRVSEHILQQRRYYPIFPGSIRTRIKPKDVSTKKETNDMESKEEKVYEHISGADLDVSYLGLTEFVGGFSPDIMIIPSELQHFARVVQNVVVINPGRFIRATGNRGSYAQITVQCPDLEDGKLTLVEGEEPVYLHNVWKRARVDLIAS.

The disordered stretch occupies residues 115 to 199; sequence KKRKLHGPFS…TPTTSRQNVP (85 aa). The segment covering 125-134 has biased composition (polar residues); that stretch reads LSDSKQTYNV. Phosphoserine is present on serine 126. The span at 181–197 shows a compositional bias: low complexity; that stretch reads STFQTPTTNTPTTSRQN.

Belongs to the DNA polymerase alpha subunit B family. In terms of assembly, DNA polymerase alpha:primase is a four subunit enzyme complex, which is assembled throughout the cell cycle, and consists of the two DNA polymerase subunits A POL1 and B POL12, and the DNA primase large PRI2 and small PRI1 subunits. Subunit B POL12 binds to subunit A POL1. Phosphorylated in a cell cycle-dependent manner.

The protein localises to the nucleus. Functionally, non-catalytic component of DNA polymerase alpha, which in a complex with DNA primase (DNA polymerase alpha:primase) constitutes a replicative polymerase. POL12 may play an essential role at the early stage of chromosomal DNA replication by coupling DNA polymerase alpha to the cellular replication machinery. Interacts with MCM10. The protein is DNA polymerase alpha subunit B (POL12) of Saccharomyces cerevisiae (strain ATCC 204508 / S288c) (Baker's yeast).